The chain runs to 59 residues: Cecropin-A1 (59 aa).

An N-terminal signal peptide occupies residues 1–23 (MNFTKLFAIVLLAALVLLGQTEA).

The protein belongs to the cecropin family.

The protein resides in the secreted. Its function is as follows. Cecropins have lytic and antibacterial activity against several Gram-positive and Gram-negative bacteria. This is Cecropin-A1 (CECA1) from Aedes albopictus (Asian tiger mosquito).